The following is an 82-amino-acid chain: Protein ImpC (82 aa).

The protein belongs to the DinI family.

In terms of biological role, the imp operon is involved in UV protection and mutation, however the ImpC protein is not essential for these functions. The chain is Protein ImpC (impC) from Salmonella typhimurium.